We begin with the raw amino-acid sequence, 197 residues long: Caspase recruitment domain-containing protein 16 (197 aa).

One can recognise a CARD domain in the interval 1-91 (MADKVLKEKR…YLAETLGLSA (91 aa)).

As to quaternary structure, homooligomer. Interacts with CASP1, CASP4, CARD8 and RIPK2. As to expression, widely expressed. Expressed at higher level in placenta, spleen, lymph node and bone marrow. Weakly or not expressed in thymus.

Caspase inhibitor. Acts as a regulator of procaspase-1/CASP1 activation implicated in the regulation of the proteolytic maturation of pro-interleukin-1 beta (IL1B) and its release during inflammation. Inhibits the release of IL1B in response to LPS in monocytes. Also induces NF-kappa-B activation during the pro-inflammatory cytokine response. Also able to inhibit CASP1-mediated neuronal cell death, TNF-alpha, hypoxia-, UV-, and staurosporine-mediated cell death but not ER stress-mediated cell death. Acts by preventing activation of caspases CASP1 and CASP4, possibly by preventing the interaction between CASP1 and RIPK2. This is Caspase recruitment domain-containing protein 16 (CARD16) from Homo sapiens (Human).